We begin with the raw amino-acid sequence, 205 residues long: ATP-dependent Clp protease proteolytic subunit (205 aa).

The active-site Nucleophile is the Ser98. His123 is a catalytic residue.

It belongs to the peptidase S14 family. In terms of assembly, fourteen ClpP subunits assemble into 2 heptameric rings which stack back to back to give a disk-like structure with a central cavity, resembling the structure of eukaryotic proteasomes.

The protein resides in the cytoplasm. The enzyme catalyses Hydrolysis of proteins to small peptides in the presence of ATP and magnesium. alpha-casein is the usual test substrate. In the absence of ATP, only oligopeptides shorter than five residues are hydrolyzed (such as succinyl-Leu-Tyr-|-NHMec, and Leu-Tyr-Leu-|-Tyr-Trp, in which cleavage of the -Tyr-|-Leu- and -Tyr-|-Trp bonds also occurs).. Cleaves peptides in various proteins in a process that requires ATP hydrolysis. Has a chymotrypsin-like activity. Plays a major role in the degradation of misfolded proteins. The polypeptide is ATP-dependent Clp protease proteolytic subunit (Desulfosudis oleivorans (strain DSM 6200 / JCM 39069 / Hxd3) (Desulfococcus oleovorans)).